A 325-amino-acid polypeptide reads, in one-letter code: tRNA(Ile)-lysidine synthase (325 aa).

Residue 34-39 (SGGQDS) participates in ATP binding.

The protein belongs to the tRNA(Ile)-lysidine synthase family.

It is found in the cytoplasm. It carries out the reaction cytidine(34) in tRNA(Ile2) + L-lysine + ATP = lysidine(34) in tRNA(Ile2) + AMP + diphosphate + H(+). Functionally, ligates lysine onto the cytidine present at position 34 of the AUA codon-specific tRNA(Ile) that contains the anticodon CAU, in an ATP-dependent manner. Cytidine is converted to lysidine, thus changing the amino acid specificity of the tRNA from methionine to isoleucine. In Synechococcus sp. (strain ATCC 27144 / PCC 6301 / SAUG 1402/1) (Anacystis nidulans), this protein is tRNA(Ile)-lysidine synthase.